A 360-amino-acid polypeptide reads, in one-letter code: Phosphoserine aminotransferase (360 aa).

Arginine 42 lines the L-glutamate pocket. Pyridoxal 5'-phosphate contacts are provided by residues 76–77 (AS), tryptophan 102, threonine 152, aspartate 172, and glutamine 195. Lysine 196 is subject to N6-(pyridoxal phosphate)lysine. 237 to 238 (NT) lines the pyridoxal 5'-phosphate pocket.

Belongs to the class-V pyridoxal-phosphate-dependent aminotransferase family. SerC subfamily. As to quaternary structure, homodimer. It depends on pyridoxal 5'-phosphate as a cofactor.

The protein resides in the cytoplasm. It catalyses the reaction O-phospho-L-serine + 2-oxoglutarate = 3-phosphooxypyruvate + L-glutamate. The enzyme catalyses 4-(phosphooxy)-L-threonine + 2-oxoglutarate = (R)-3-hydroxy-2-oxo-4-phosphooxybutanoate + L-glutamate. It functions in the pathway amino-acid biosynthesis; L-serine biosynthesis; L-serine from 3-phospho-D-glycerate: step 2/3. Its function is as follows. Catalyzes the reversible conversion of 3-phosphohydroxypyruvate to phosphoserine and of 3-hydroxy-2-oxo-4-phosphonooxybutanoate to phosphohydroxythreonine. This chain is Phosphoserine aminotransferase, found in Bacillus thuringiensis subsp. konkukian (strain 97-27).